The following is a 1102-amino-acid chain: MDPIRSRTPSPARELLPGPQPDRVQPTADRGGAPPAGGPLDGLPARRTMSRTRLPSPPAPSPAFSAGSFSDLLRQFDPSLLDTSLLDSMPAVGTPHTAAAPAECDEVQSGLRAADDPPPTVRVAVTARPPRAKPAPRRRAAQPSDASPAAQVDLRTLGYSQQQQEKIKPKVRSTVAQHHEALVGHGFTHAHIVALSQHPAALGTVAVTYQDIIRALPEATHEDIVGVGKQWSGARALEALLTEAGELRGPPLQLDTGQLLKIAKRGGVTAVEAVHAWRNALTGAPLNLTPDQVVAIASNIGGNQALETVQRLLPVLCQAHGLTPDQVVAIASHGGGKQALETVQRLLPVLCQAHGLTPDQVVAIASNIGGKQALATVQRLLPVLCQDHGLTPDQVVAIASHGGGKQALETVQRLLPVLCQDHGLTPDQVVAIASNIGGKQALETVQRLLPVLCQDHGLTPDQVVAIASNIGGKQALETVQRLLPVLCQDHGLTPDQVVAIASNNGGKQALETVQRLLPVLCQTHGLTPDQVVAIANHDGGKQALETVQRLLPVLCQDHGLTPDQVVAIASNIGGKQALATVQRLLPVLCQAHGLTPDQVVAIASHDGGKQALETVQRLLPVLCQDHGLTPDQVVAIASNNGGKQALETVQRLLPVLCQDHGLTPAQVVAIANHGGGKQALETVQRLLPVLCQDHGLTPVQVVAIASNSGGKQALETVQRLLPVLCQDHGLTPVQVVAIASNGGGKQALATVQRLLPVLCQDHGLTPVQVVAIASHDGGKQALETVQRLLPVLCQDHGLTPDQVVAIASNGGKQALESIVAQLSRPDPALAALTNDHLVALACLGGRPALDAVKKGLPHAPELIRRINRRIPERTSHRVADLAHVVRVLGFFQSHSHPAQAFDDAMTQFGMSRHGLAQLFRRVGVTELEARYGTLPPASQRWDRILQASGMKRVKPSPTSAQTPDQASLHAFADSLERDLDAPSPMHEGDQTRASSRKRSRSDRAVTGPSTQQSFEVRVPEQQDALHLPLSWRVKRPRTRIGGGLPDPGTPIAADLAASSTVMWEQDAAPFAGAADDFPAFNEEELAWLMELLPQSGSVGGTI.

2 disordered regions span residues 1 to 68 (MDPI…SAGS) and 127 to 151 (ARPP…PAAQ). A compositionally biased stretch (basic residues) spans 130-140 (PRAKPAPRRRA). The segment covering 141 to 151 (AQPSDASPAAQ) has biased composition (low complexity). 15 Core repeat repeats span residues 288–321 (LTPD…QAHG), 322–355 (LTPD…QAHG), 356–389 (LTPD…QDHG), 390–423 (LTPD…QDHG), 424–457 (LTPD…QDHG), 458–491 (LTPD…QDHG), 492–525 (LTPD…QTHG), 526–559 (LTPD…QDHG), 560–593 (LTPD…QAHG), 594–627 (LTPD…QDHG), 628–661 (LTPD…QDHG), 662–695 (LTPA…QDHG), 696–729 (LTPV…QDHG), 730–763 (LTPV…QDHG), and 764–797 (LTPV…QDHG). The Core repeat 15.5 repeat unit spans residues 798 to 809 (LTPDQVVAIASN). The Nuclear localization sequence A (NLSA) signature appears at 951–954 (KRVK). Residues 978–990 (DLDAPSPMHEGDQ) are compositionally biased toward basic and acidic residues. Residues 978-1021 (DLDAPSPMHEGDQTRASSRKRSRSDRAVTGPSTQQSFEVRVPEQ) are disordered. Residues 997–1000 (KRSR) carry the Nuclear localization sequence B (NLSB) motif. Residues 1034-1037 (KRPR) carry the Nuclear localization sequence C (NLSC) motif. The segment at 1063–1093 (WEQDAAPFAGAADDFPAFNEEELAWLMELLP) is activation domain.

It belongs to the transcription activator-like effector (TALE) family.

Its subcellular location is the secreted. It localises to the host nucleus. In terms of biological role, avirulence protein. Induces the hypersensitive response (HR)in rice plants carrying the resistance gene Xa10. Activity depends on the presence of the core repeat domains; replacement with repeat domains from other proteins (AvrBs3 of X.euvesicatoria (AC P14727) or AvrXa7 of this organism) does not elicit the HR. Probably acts as a transcription factor in its host plant (rice) to induce plant resistance or disease. The protein is Avirulence protein AvrXa10 of Xanthomonas oryzae pv. oryzae.